The following is a 354-amino-acid chain: Glutamine synthetase (354 aa).

The GS beta-grasp domain maps to 22-101 (FHAEYVWIDG…VLSETYNNDG (80 aa)). One can recognise a GS catalytic domain in the interval 108–354 (HRHHTAKVME…IIIETTILDK (247 aa)).

Belongs to the glutamine synthetase family. Homooctamer.

It localises to the cytoplasm. It carries out the reaction L-glutamate + NH4(+) + ATP = L-glutamine + ADP + phosphate + H(+). The sequence is that of Glutamine synthetase (GLN1) from Amanita muscaria (Fly agaric).